The primary structure comprises 134 residues: UPF0102 protein Adeh_1910 (134 aa).

Belongs to the UPF0102 family.

This is UPF0102 protein Adeh_1910 from Anaeromyxobacter dehalogenans (strain 2CP-C).